We begin with the raw amino-acid sequence, 312 residues long: Olfactory receptor 2M5 (312 aa).

The Extracellular segment spans residues 1 to 25 (MAWENQTFNSDFILLGIFNHSPTHT). N-linked (GlcNAc...) asparagine glycosylation occurs at Asn-5. The helical transmembrane segment at 26 to 49 (FLFFLVLAIFSVAFMGNSVMVLLI) threads the bilayer. The Cytoplasmic segment spans residues 50–57 (YLDTQLHT). The chain crosses the membrane as a helical span at residues 58–79 (PMYFLLSQLFLMDLMLICSTVP). At 80–100 (KMAFNYLSGSKSISMAGCATQ) the chain is on the extracellular side. Cys-97 and Cys-189 form a disulfide bridge. A helical transmembrane segment spans residues 101 to 120 (IFFYVSLLGSECFLLAVMSY). Topologically, residues 121 to 139 (DRYIAICHPLRYTNLMRPK) are cytoplasmic. A helical membrane pass occupies residues 140–158 (ICGLMTAFSWILGSMDAII). Over 159–195 (DAVATFSFSYCGSREIAHFFCDFPSLLILSCNDTSIF) the chain is Extracellular. A helical transmembrane segment spans residues 196 to 219 (EKVLFICCIVMIVFPVAIIIASYA). The Cytoplasmic portion of the chain corresponds to 220 to 236 (RVILAVIHMGSGEGRRK). Residues 237 to 259 (AFTTCSSHLMVVGMYYGAGLFMY) traverse the membrane as a helical segment. Residues 260 to 272 (IRPTSDRSPMQDK) are Extracellular-facing. The helical transmembrane segment at 273–292 (LVSVFYTILTPMLNPLIYSL) threads the bilayer. Residues 293–311 (RNKEVTRALRKVLGKGKCG) are Cytoplasmic-facing.

Belongs to the G-protein coupled receptor 1 family.

The protein localises to the cell membrane. Its function is as follows. Odorant receptor. The protein is Olfactory receptor 2M5 (OR2M5) of Homo sapiens (Human).